We begin with the raw amino-acid sequence, 461 residues long: Argininosuccinate lyase (461 aa).

Belongs to the lyase 1 family. Argininosuccinate lyase subfamily.

It is found in the cytoplasm. It catalyses the reaction 2-(N(omega)-L-arginino)succinate = fumarate + L-arginine. The protein operates within amino-acid biosynthesis; L-arginine biosynthesis; L-arginine from L-ornithine and carbamoyl phosphate: step 3/3. This chain is Argininosuccinate lyase, found in Desulfitobacterium hafniense (strain DSM 10664 / DCB-2).